A 76-amino-acid chain; its full sequence is Small ribosomal subunit protein bS18 (76 aa).

This sequence belongs to the bacterial ribosomal protein bS18 family. In terms of assembly, part of the 30S ribosomal subunit. Forms a tight heterodimer with protein bS6.

Binds as a heterodimer with protein bS6 to the central domain of the 16S rRNA, where it helps stabilize the platform of the 30S subunit. This chain is Small ribosomal subunit protein bS18, found in Pseudomonas fluorescens (strain ATCC BAA-477 / NRRL B-23932 / Pf-5).